The primary structure comprises 107 residues: Integration host factor subunit beta (107 aa).

A disordered region spans residues 87-107; it reads RERVNNGTRKNGGSADAASGG.

The protein belongs to the bacterial histone-like protein family. Heterodimer of an alpha and a beta chain.

This protein is one of the two subunits of integration host factor, a specific DNA-binding protein that functions in genetic recombination as well as in transcriptional and translational control. In Granulibacter bethesdensis (strain ATCC BAA-1260 / CGDNIH1), this protein is Integration host factor subunit beta.